The sequence spans 319 residues: Annexin A5 (319 aa).

An N-acetylalanine modification is found at Ala-2. Annexin repeat units lie at residues 13-84, 85-156, 168-240, and 244-315; these read FDGR…ALMK, PSRL…VLLQ, AQVE…AVVK, and SIPA…LLCG. A Glycyl lysine isopeptide (Lys-Gly) (interchain with G-Cter in SUMO1); alternate cross-link involves residue Lys-27. A Glycyl lysine isopeptide (Lys-Gly) (interchain with G-Cter in SUMO2); alternate cross-link involves residue Lys-27. Ser-35 is modified (phosphoserine). N6-acetyllysine occurs at positions 68, 74, 77, 95, and 99. Lys-288 is subject to N6-succinyllysine. The [IL]-x-C-x-x-[DE] motif signature appears at 312–318; sequence LLCGGED.

It belongs to the annexin family. Monomer. Binds ATRX, EIF5B and DNMT1. In terms of processing, S-nitrosylation is induced by interferon-gamma and oxidatively-modified low-densitity lipoprotein (LDL(ox)) possibly implicating the iNOS-S100A8/9 transnitrosylase complex.

In terms of biological role, this protein is an anticoagulant protein that acts as an indirect inhibitor of the thromboplastin-specific complex, which is involved in the blood coagulation cascade. This chain is Annexin A5 (Anxa5), found in Rattus norvegicus (Rat).